Consider the following 137-residue polypeptide: Putative pre-16S rRNA nuclease (137 aa).

The protein belongs to the YqgF nuclease family.

It is found in the cytoplasm. Its function is as follows. Could be a nuclease involved in processing of the 5'-end of pre-16S rRNA. This is Putative pre-16S rRNA nuclease from Clostridium botulinum (strain Alaska E43 / Type E3).